The chain runs to 208 residues: Hemocyanin, units E and F (208 aa).

Cu cation is bound at residue His-1. Residues 1-74 (HGLPAQCPNA…HDLESVRGNL (74 aa)) form a unit E region. A disulfide bridge links Cys-7 with Cys-18. The 2'-(S-cysteinyl)-histidine (Cys-His) cross-link spans 19 to 21 (CLH). Residue Asn-43 is glycosylated (N-linked (GlcNAc...) asparagine). Residues 75–208 (VRKNVDRLSL…GHLSLLSPET (134 aa)) form a unit F region. His-113 contacts Cu cation. Cys-119 and Cys-130 are joined by a disulfide. Positions 131–133 (CLH) form a cross-link, 2'-(S-cysteinyl)-histidine (Cys-His). His-133 and His-142 together coordinate Cu cation.

It belongs to the tyrosinase family. Hemocyanin subfamily. As to quaternary structure, decamers of large identical subunits (390 kDa), each containing 8 globular oxygen-binding functional units. Requires Cu(2+) as cofactor.

Hemocyanins are copper-containing oxygen carriers occurring freely dissolved in the hemolymph of many mollusks and arthropods. In Sepia officinalis (Common cuttlefish), this protein is Hemocyanin, units E and F.